Consider the following 364-residue polypeptide: Protein-glutamate methylesterase/protein-glutamine glutaminase (364 aa).

Positions 7–124 (RALIVDDSAL…SQNMPDMAEE (118 aa)) constitute a Response regulatory domain. The residue at position 58 (D58) is a 4-aspartylphosphate. The CheB-type methylesterase domain maps to 167–364 (ETTSFVRNVL…MAEEIVKIIS (198 aa)). Catalysis depends on residues S181, H208, and D308.

The protein belongs to the CheB family. In terms of processing, phosphorylated by CheA. Phosphorylation of the N-terminal regulatory domain activates the methylesterase activity.

It localises to the cytoplasm. The catalysed reaction is [protein]-L-glutamate 5-O-methyl ester + H2O = L-glutamyl-[protein] + methanol + H(+). It catalyses the reaction L-glutaminyl-[protein] + H2O = L-glutamyl-[protein] + NH4(+). In terms of biological role, involved in chemotaxis. Part of a chemotaxis signal transduction system that modulates chemotaxis in response to various stimuli. Catalyzes the demethylation of specific methylglutamate residues introduced into the chemoreceptors (methyl-accepting chemotaxis proteins or MCP) by CheR. Also mediates the irreversible deamidation of specific glutamine residues to glutamic acid. The protein is Protein-glutamate methylesterase/protein-glutamine glutaminase of Methanosarcina barkeri (strain Fusaro / DSM 804).